The following is a 496-amino-acid chain: L-arabinose isomerase (496 aa).

The Mn(2+) site is built by glutamate 306, glutamate 331, histidine 348, and histidine 447.

The protein belongs to the arabinose isomerase family. As to quaternary structure, homotetramer. Mn(2+) serves as cofactor.

The catalysed reaction is beta-L-arabinopyranose = L-ribulose. It functions in the pathway carbohydrate degradation; L-arabinose degradation via L-ribulose; D-xylulose 5-phosphate from L-arabinose (bacterial route): step 1/3. With respect to regulation, inhibited by copper. In terms of biological role, catalyzes the conversion of L-arabinose to L-ribulose. In vitro, converts D-galactose into D-tagatose. In Geobacillus stearothermophilus (Bacillus stearothermophilus), this protein is L-arabinose isomerase (araA).